The primary structure comprises 452 residues: MGSSQSVEIPGGGTEGYHVLRVQENSPGHRAGLEPFFDFIVSINGSRLNKDNDTLKDLLKANVEKPVKMLIYSSKTLELRETSVTPSNLWGGQGLLGVSIRFCSFDGANENVWHVLEVESNSPAALAGLRPHSDYIIGADTVMNESEDLFSLIETHEAKPLKLYVYNTDTDNCREVIITPNSAWGGEGSLGCGIGYGYLHRIPTRPFEEGKKISLPGQMAGTPITPLKDGFTEVQLSSVNPPSLSPPGTTGIEQSLTGLSISSTPPAVSSVLSTGVPTVPLLPPQVNQSLTSVPPMNPATTLPGLMPLPAGLPNLPNLNLNLPAPHIMPGVGLPELVNPGLPPLPSMPPRNLPGIAPLPLPSEFLPSFPLVPESSSAASSGELLSSLPPTSNAPSDPATTTAKADAASSLTVDVTPPTAKAPTTVEDRVGDSTPVSEKPVSAAVDANASESP.

The N-myristoyl glycine moiety is linked to residue G2. 2 consecutive PDZ GRASP-type domains span residues 15–105 (EGYH…FCSF) and 111–199 (NVWH…YGYL). The segment at 15 to 215 (EGYHVLRVQE…PFEEGKKISL (201 aa)) is GRASP. R30 and R47 each carry dimethylated arginine. Residues 194 to 199 (IGYGYL) are important for membrane binding. The residue at position 214 (S214) is a Phosphoserine. Phosphothreonine is present on residues T222 and T225. Positions 372–424 (PESSSAASSGELLSSLPPTSNAPSDPATTTAKADAASSLTVDVTPPTAKAPTT) are enriched in low complexity. The interval 372–452 (PESSSAASSG…AVDANASESP (81 aa)) is disordered. Residue S409 is modified to Phosphoserine. 2 positions are modified to phosphothreonine: T415 and T433. Residues S436, S441, S449, and S451 each carry the phosphoserine modification.

This sequence belongs to the GORASP family. In terms of assembly, homodimer. Homooligomer. ER stress induces phosphorylation-dependent monomerization. Interacts with BLZF1/Golgin 45. Identified in a complex with RAB2 and GORASP2. Interacts with JAM2 and JAM3. Interacts with members of the p24 cargo receptors. Interacts with CNIH1 and the cytoplasmic domain of transmembrane TGFA, prior its transit in the trans-Golgi. Interacts with KCTD5. Interacts with TMED2 and TMED3. Interacts with SEC16A in response to ER stress. Interacts (via PDZ GRASP-type 1 domain) with core-glycosylated CFTR in response to ER stress. Myristoylated. Myristoylation is essential for the Golgi targeting. In terms of processing, palmitoylated. Post-translationally, phosphorylated in mitotic cells. ER stress-induced phosphorylation at Ser-441 induces monomerization and subsequent relocalization from Golgi to ER which is essential for mediating unconventional (ER/Golgi-independent) trafficking of CFTR to the cell membrane.

The protein resides in the golgi apparatus membrane. It localises to the endoplasmic reticulum membrane. It is found in the golgi apparatus. Its function is as follows. Key structural protein of the Golgi apparatus. The membrane cisternae of the Golgi apparatus adhere to each other to form stacks, which are aligned side by side to form the Golgi ribbon. Acting in concert with GORASP1/GRASP65, is required for the formation and maintenance of the Golgi ribbon, and may be dispensable for the formation of stacks. However, other studies suggest that GORASP2 plays a role in the assembly and membrane stacking of the Golgi cisternae, and in the process by which Golgi stacks reform after breakdown during mitosis and meiosis. May regulate the intracellular transport and presentation of a defined set of transmembrane proteins, such as transmembrane TGFA. Required for normal acrosome formation during spermiogenesis and normal male fertility, probably by promoting colocalization of JAM2 and JAM3 at contact sites between germ cells and Sertoli cells. Mediates ER stress-induced unconventional (ER/Golgi-independent) trafficking of core-glycosylated CFTR to cell membrane. The protein is Golgi reassembly-stacking protein 2 (GORASP2) of Homo sapiens (Human).